The following is a 422-amino-acid chain: Probable tRNA pseudouridine synthase D 2 (422 aa).

Residue D89 is the Nucleophile of the active site. The 212-residue stretch at 160-371 (GAPNYFDSQR…IYSERKILSI (212 aa)) folds into the TRUD domain.

The protein belongs to the pseudouridine synthase TruD family.

The enzyme catalyses uridine(13) in tRNA = pseudouridine(13) in tRNA. Functionally, could be responsible for synthesis of pseudouridine from uracil-13 in transfer RNAs. In Methanocaldococcus jannaschii (strain ATCC 43067 / DSM 2661 / JAL-1 / JCM 10045 / NBRC 100440) (Methanococcus jannaschii), this protein is Probable tRNA pseudouridine synthase D 2.